The sequence spans 1146 residues: MDECLPNSCLLGVHLVISTHSGPQIVYHYPPSNTAFLTNNPTKHQHLYGNHANLNKNTSTNKEEKLFNSGSTKTASQIALNESAKSYNTAITPSMTNTNTNNVTLPPTRSHANTVGSQSSIPAATNGVGYRKTDIEDTSRTFQYQETESETSSSGLSDSELSTDYLDISSDSFSISSSLSSSSLSSSPSSSSSSSPPQDGLSRTNSSFQSTDSMSPTSPQMIMENDSISVAESYLDSGTNNKSRAASKRSQNFFHKLSTKKSTDSKTHSPVRKLKSKPSQSTKKGNKLLKNTSNETDGNAFTGSCSISSKKSLSSTGEHNQELRNSSLNDTPGQSPHHYHHRYHHYHKNAATSQRNSHTQYDVEEEDMEVSAMLQDGKISMNEIFFEEENFQDINKILEFDNDFVAEFCSPEREMCNTRFEFTVDNFCFLGLPIHVDSQGRWRKSKHKNKTRSKRSSSTTTNISRKKSIASKISSLSENTLKKVNSGEADTVYDSNIGHEASTDTPNLRINTDVSGNEFEREKEDLGKNMNMFHVCFVMNPHLIEYNKRIDDMYQFVVTRLSLLLRYVQSKTSYISSECHIILKEKERVLKHSKTYQSIRGAGNKGKYLYQRILAKSSLARALTECVDKIQRNEIACLEINDDKVISLQIPIQNEFEKMPNFKLQPVLRGSYLTSILNMKFLEKSSLRIESQNRQNDQAQFSDTNNNIYRFGNNINSTGHCGAANVDDGDDNESNYYCDDNDDLLNYALLLLDEPNNIISSLETFSYQDDIGTIILKHLVRNIQPNIPLRSYRYLITDLLDNPSSLDDLTTETNSLESSILRSCALHLMYWRHARIVIPLSSKYTYIVSPLAPIQGYTIDDYKSTSQNDGNVKKMDDRENNKSGSDRVPLIYQNSMLFRSKFPSLPSLPIFLSLLSTDKPQAYSNIIPSREHKPVYLNALAWLIQYGYVTQLLTFINIRVDKHIKMAVDEDLEKEGFRKTNTARRPSMDYKKTDKKLDDEDGQSRDANASEACSGKNEGMQSNDNNKDVDEKDNENDSRVDDRDDNEIAIADEEEILHFEYDDPEMQHDYTIILEPERATAIEKRWLYRCIYGQPSDIQILFNKLLKYFNGKVPMELVIIKEEISRHDLKKLLNALDKYLIEIHHW.

Residues 1-25 form the signal peptide; that stretch reads MDECLPNSCLLGVHLVISTHSGPQI. Ser-76 is subject to Phosphoserine. Disordered regions lie at residues 90–159, 177–221, 237–340, and 440–466; these read AITP…LSDS, SSLS…SPQM, SGTN…HHYH, and GRWRKSKHKNKTRSKRSSSTTTNISRK. The span at 105-123 shows a compositional bias: polar residues; it reads LPPTRSHANTVGSQSSIPA. Low complexity-rich tracts occupy residues 150–159 and 177–196; these read ETSSSGLSDS and SSLSSSSLSSSPSSSSSSSP. 3 stretches are compositionally biased toward polar residues: residues 201-221, 237-253, and 277-303; these read LSRTNSSFQSTDSMSPTSPQM, SGTNNKSRAASKRSQNF, and KPSQSTKKGNKLLKNTSNETDGNAFTG. Residues 304–315 are compositionally biased toward low complexity; it reads SCSISSKKSLSS. Polar residues predominate over residues 323–334; the sequence is LRNSSLNDTPGQ. Basic residues predominate over residues 441 to 455; that stretch reads RWRKSKHKNKTRSKR. Phosphoserine occurs at positions 486 and 987. The segment at 979 to 1047 is disordered; sequence KTNTARRPSM…SRVDDRDDNE (69 aa). 2 stretches are compositionally biased toward basic and acidic residues: residues 986-1004 and 1025-1042; these read PSMDYKKTDKKLDDEDGQS and NNKDVDEKDNENDSRVDD.

Belongs to the NPR3 family. As to quaternary structure, component of the SEA complex composed of at least IML1/SEA1, RTC1/SEA2, MTC5/SEA3, NPR2, NPR3, SEA4, SEC13 and SEH1. Forms a heterodimer with NPR2.

It localises to the vacuole membrane. Functionally, component of the SEA complex which coats the vacuolar membrane and is involved in intracellular trafficking, autophagy, response to nitrogen starvation, and amino acid biogenesis. Mediates inactivation of the TORC1 complex in response to amino acid starvation. Required for meiotic nuclear division. This Saccharomyces cerevisiae (strain ATCC 204508 / S288c) (Baker's yeast) protein is Nitrogen permease regulator 3 (NPR3).